Consider the following 358-residue polypeptide: Acyl-CoA Delta-12 desaturase (358 aa).

2 helical membrane-spanning segments follow: residues 30–50 (IILY…AMFY) and 55–75 (TVFY…AGSH). Positions 75, 80, 112, 115, and 116 each coordinate Fe cation. Positions 75-80 (HRLWAH) match the Histidine box-1 motif. A Histidine box-2 motif is present at residues 112 to 116 (HRVHH). The next 2 helical transmembrane spans lie at 175–195 (TFFA…YFWG) and 200–220 (TAFF…TFLV). Histidine 225, histidine 254, histidine 257, and histidine 258 together coordinate Fe cation. A Histidine box-3 motif is present at residues 254-258 (HNYHH).

The protein belongs to the fatty acid desaturase type 1 family. Requires Fe(2+) as cofactor.

It is found in the membrane. The enzyme catalyses (9Z)-octadecenoyl-CoA + 2 Fe(II)-[cytochrome b5] + O2 + 2 H(+) = (9Z,12Z)-octadecadienoyl-CoA + 2 Fe(III)-[cytochrome b5] + 2 H2O. The catalysed reaction is (9Z)-hexadecenoyl-CoA + 2 Fe(II)-[cytochrome b5] + O2 + 2 H(+) = (9Z,12Z)-hexadecadienoyl-CoA + 2 Fe(III)-[cytochrome b5] + 2 H2O. Functionally, catalyzes the formation of a Delta12 double bond, acting on monounsaturated fatty acyl substrates like palmitoleoyl-CoA ((9Z)-hexadecenoyl-CoA) and oleoyl-CoA ((9Z)-octadecenoyl-CoA) with higher desaturation activity on (9Z)-octadecenoyl-CoA than (9Z)-hexadecenoyl-CoA. Requires preexisting cis double bond at the Delta9 position of fatty acyls to be able to insert the Delta12 double bond. Delta12-desaturation of (9Z)-octadecenoyl-CoA in insects produces (9Z,12Z)-octadecadienoyl-CoA (linoleoyl-CoA) which may be used to supply precursors of crucial mediators of immunity and reproduction and other essential functions. The protein is Acyl-CoA Delta-12 desaturase of Tribolium castaneum (Red flour beetle).